Reading from the N-terminus, the 160-residue chain is Zinc finger A20 and AN1 domain-containing stress-associated protein 5 (160 aa).

The A20-type zinc-finger motif lies at 20 to 54 (TTTTTLCTNNCGVTANPATNNMCQKCFNASLVSAA). Residues Cys26, Cys30, Cys42, Cys45, Cys101, Cys104, Cys115, Cys117, Cys122, His125, His131, and Cys133 each contribute to the Zn(2+) site. The AN1-type zinc finger occupies 95-141 (QQIVNRCSGCRKKVGLTGFRCRCGELFCSEHRYSDRHDCSYDYKTAG).

In terms of biological role, may be involved in environmental stress response. This chain is Zinc finger A20 and AN1 domain-containing stress-associated protein 5 (SAP5), found in Arabidopsis thaliana (Mouse-ear cress).